We begin with the raw amino-acid sequence, 432 residues long: Adenylosuccinate synthetase (432 aa).

GTP contacts are provided by residues 12-18 and 40-42; these read GDEGKGK and GHT. The Proton acceptor role is filled by aspartate 13. Mg(2+) is bound by residues aspartate 13 and glycine 40. Residues 13 to 16, 38 to 41, threonine 132, arginine 146, glutamine 226, threonine 241, and arginine 305 contribute to the IMP site; these read DEGK and NAGH. The active-site Proton donor is histidine 41. 301–307 is a binding site for substrate; it reads VVTGRKR. Residues arginine 307, 333–335, and 415–417 contribute to the GTP site; these read KLD and STS.

Belongs to the adenylosuccinate synthetase family. Homodimer. It depends on Mg(2+) as a cofactor.

It is found in the cytoplasm. It carries out the reaction IMP + L-aspartate + GTP = N(6)-(1,2-dicarboxyethyl)-AMP + GDP + phosphate + 2 H(+). It participates in purine metabolism; AMP biosynthesis via de novo pathway; AMP from IMP: step 1/2. Its function is as follows. Plays an important role in the de novo pathway of purine nucleotide biosynthesis. Catalyzes the first committed step in the biosynthesis of AMP from IMP. The chain is Adenylosuccinate synthetase from Rhizobium johnstonii (strain DSM 114642 / LMG 32736 / 3841) (Rhizobium leguminosarum bv. viciae).